The following is a 500-amino-acid chain: L-arabinose isomerase (500 aa).

E306, E333, H349, and H448 together coordinate Mn(2+).

The protein belongs to the arabinose isomerase family. Mn(2+) serves as cofactor.

The catalysed reaction is beta-L-arabinopyranose = L-ribulose. Its pathway is carbohydrate degradation; L-arabinose degradation via L-ribulose; D-xylulose 5-phosphate from L-arabinose (bacterial route): step 1/3. Functionally, catalyzes the conversion of L-arabinose to L-ribulose. This chain is L-arabinose isomerase, found in Saccharophagus degradans (strain 2-40 / ATCC 43961 / DSM 17024).